The primary structure comprises 206 residues: Isochorismatase family protein 1A (206 aa).

The protein belongs to the isochorismatase family.

The polypeptide is Isochorismatase family protein 1A (Dictyostelium discoideum (Social amoeba)).